The primary structure comprises 234 residues: Phosphoglycolate phosphatase (234 aa).

The active-site Nucleophile is the Asp15. Positions 15, 17, and 177 each coordinate Mg(2+).

This sequence belongs to the HAD-like hydrolase superfamily. CbbY/CbbZ/Gph/YieH family. In terms of assembly, monomer. It depends on Mg(2+) as a cofactor. The cofactor is chloride.

It carries out the reaction 2-phosphoglycolate + H2O = glycolate + phosphate. It participates in organic acid metabolism; glycolate biosynthesis; glycolate from 2-phosphoglycolate: step 1/1. Functionally, specifically catalyzes the dephosphorylation of 2-phosphoglycolate. Is involved in the dissimilation of the intracellular 2-phosphoglycolate formed during the DNA repair of 3'-phosphoglycolate ends, a major class of DNA lesions induced by oxidative stress. The chain is Phosphoglycolate phosphatase from Photorhabdus laumondii subsp. laumondii (strain DSM 15139 / CIP 105565 / TT01) (Photorhabdus luminescens subsp. laumondii).